The primary structure comprises 201 residues: MSRYRGPRFKKIRRLGALPGLTNKRPRAGSDLRNQSRSGKKSQYRIRLEEKQKLRFHYGLTERQLLKYVRIAGKAKGSTGQVLLQLLEMRLDNILFRLGMAPTIPGARQLVNHRHILVNGRIVDIPSYRCKPRDTIAARDEQKSKVLIQNSLDSSPHEELPNHLTLQPFQYKGLVNQIIDSKWVGLKINELLVVEYYSRQT.

Residues 15-44 (LGALPGLTNKRPRAGSDLRNQSRSGKKSQY) are disordered. The S4 RNA-binding domain maps to 89-150 (MRLDNILFRL…EQKSKVLIQN (62 aa)).

This sequence belongs to the universal ribosomal protein uS4 family. As to quaternary structure, part of the 30S ribosomal subunit. Contacts protein S5. The interaction surface between S4 and S5 is involved in control of translational fidelity.

It is found in the plastid. The protein resides in the chloroplast. One of the primary rRNA binding proteins, it binds directly to 16S rRNA where it nucleates assembly of the body of the 30S subunit. Its function is as follows. With S5 and S12 plays an important role in translational accuracy. The chain is Small ribosomal subunit protein uS4c (rps4) from Lactuca sativa (Garden lettuce).